We begin with the raw amino-acid sequence, 274 residues long: ATP synthase subunit delta (274 aa).

The protein belongs to the ATPase delta chain family. In terms of assembly, F-type ATPases have 2 components, F(1) - the catalytic core - and F(0) - the membrane proton channel. F(1) has five subunits: alpha(3), beta(3), gamma(1), delta(1), epsilon(1). F(0) has three main subunits: a(1), b(2) and c(10-14). The alpha and beta chains form an alternating ring which encloses part of the gamma chain. F(1) is attached to F(0) by a central stalk formed by the gamma and epsilon chains, while a peripheral stalk is formed by the delta and b chains.

The protein resides in the cell membrane. In terms of biological role, f(1)F(0) ATP synthase produces ATP from ADP in the presence of a proton or sodium gradient. F-type ATPases consist of two structural domains, F(1) containing the extramembraneous catalytic core and F(0) containing the membrane proton channel, linked together by a central stalk and a peripheral stalk. During catalysis, ATP synthesis in the catalytic domain of F(1) is coupled via a rotary mechanism of the central stalk subunits to proton translocation. Its function is as follows. This protein is part of the stalk that links CF(0) to CF(1). It either transmits conformational changes from CF(0) to CF(1) or is implicated in proton conduction. The chain is ATP synthase subunit delta from Corynebacterium efficiens (strain DSM 44549 / YS-314 / AJ 12310 / JCM 11189 / NBRC 100395).